Reading from the N-terminus, the 93-residue chain is Putative membrane protein insertion efficiency factor (93 aa).

The disordered stretch occupies residues 72–93 (VPEHFPSWRGPHPKTPSRKTPE). Residues 82-93 (PHPKTPSRKTPE) are compositionally biased toward basic residues.

It belongs to the UPF0161 family.

The protein resides in the cell membrane. In terms of biological role, could be involved in insertion of integral membrane proteins into the membrane. This chain is Putative membrane protein insertion efficiency factor, found in Deinococcus geothermalis (strain DSM 11300 / CIP 105573 / AG-3a).